We begin with the raw amino-acid sequence, 177 residues long: Bifunctional protein PyrR (177 aa).

Substrate contacts are provided by residues 42–43, 104–112, and Arg-137; these read SR and DDVLYTGRT. The PRPP-binding signature appears at 100–112; sequence VVIVDDVLYTGRT.

Belongs to the purine/pyrimidine phosphoribosyltransferase family. PyrR subfamily.

The enzyme catalyses UMP + diphosphate = 5-phospho-alpha-D-ribose 1-diphosphate + uracil. Functionally, regulates the transcription of the pyrimidine nucleotide (pyr) operon in response to exogenous pyrimidines. Its function is as follows. Also displays a weak uracil phosphoribosyltransferase activity which is not physiologically significant. This chain is Bifunctional protein PyrR, found in Fusobacterium nucleatum subsp. nucleatum (strain ATCC 25586 / DSM 15643 / BCRC 10681 / CIP 101130 / JCM 8532 / KCTC 2640 / LMG 13131 / VPI 4355).